The primary structure comprises 297 residues: AKT-interacting protein (297 aa).

The span at 1-13 (MNLNPFWSMSTNT) shows a compositional bias: polar residues. The disordered stretch occupies residues 1 to 45 (MNLNPFWSMSTNTGRKRSDGEEQSGEQQQQQRASPARPSFGKKQL). A compositionally biased stretch (low complexity) spans 25-39 (GEQQQQQRASPARPS). The region spanning 79-227 (YLEYSLLAEF…VVDSVKLCNS (149 aa)) is the UBC core domain. The interval 262–297 (KRRPEDHHKGLQVSGLSWVKPGSTQPFSKDDNPPQN) is disordered.

It belongs to the ubiquitin-conjugating enzyme family. FTS subfamily.

It localises to the cytoplasm. The protein resides in the cell membrane. May function to promote vesicle trafficking and/or fusion. May also regulate apoptosis. In Salmo salar (Atlantic salmon), this protein is AKT-interacting protein (aktip).